A 474-amino-acid polypeptide reads, in one-letter code: Glutamate--tRNA ligase (474 aa).

A 'HIGH' region motif is present at residues 11–21 (PSPTGFLHIGG). Positions 240–244 (KLSKR) match the 'KMSKS' region motif. Position 243 (lysine 243) interacts with ATP.

Belongs to the class-I aminoacyl-tRNA synthetase family. Glutamate--tRNA ligase type 1 subfamily. In terms of assembly, monomer.

Its subcellular location is the cytoplasm. It carries out the reaction tRNA(Glu) + L-glutamate + ATP = L-glutamyl-tRNA(Glu) + AMP + diphosphate. Functionally, catalyzes the attachment of glutamate to tRNA(Glu) in a two-step reaction: glutamate is first activated by ATP to form Glu-AMP and then transferred to the acceptor end of tRNA(Glu). In Nitrobacter hamburgensis (strain DSM 10229 / NCIMB 13809 / X14), this protein is Glutamate--tRNA ligase.